A 332-amino-acid chain; its full sequence is Nucleoid-associated protein VP2128 (332 aa).

This sequence belongs to the YejK family.

It localises to the cytoplasm. It is found in the nucleoid. The chain is Nucleoid-associated protein VP2128 from Vibrio parahaemolyticus serotype O3:K6 (strain RIMD 2210633).